Consider the following 320-residue polypeptide: MADPIRSYLDFEKPVAELDSKIDELRALAANGSDISEEISRIEDKAKAALHELYANLTPWQKTQVARHPQRPHCIDYIAGLITEFTPLAGDRKFSDDDAMIGGFGRFRGESVCIIGQEKGSTTESRLKHNFGMARPEGYRKAVRLMDMADRFGIRILSLVDTAGAYPGIGAEERGQAEAIARSTEACLNLTVPNVAVILGEGGSGGAIAIATANRVMMLEHAVYSVISPEGAASILWRDATKAQEAATNLKVTAQDLARFGIIDTVLKEPPGGAHRDPADMIARTGDAIAQAFSDLAPLDPKTVRTQRRQKFLDIGRRLG.

The CoA carboxyltransferase C-terminal domain maps to 42 to 295 (IEDKAKAALH…GDAIAQAFSD (254 aa)).

Belongs to the AccA family. As to quaternary structure, acetyl-CoA carboxylase is a heterohexamer composed of biotin carboxyl carrier protein (AccB), biotin carboxylase (AccC) and two subunits each of ACCase subunit alpha (AccA) and ACCase subunit beta (AccD).

Its subcellular location is the cytoplasm. It carries out the reaction N(6)-carboxybiotinyl-L-lysyl-[protein] + acetyl-CoA = N(6)-biotinyl-L-lysyl-[protein] + malonyl-CoA. It participates in lipid metabolism; malonyl-CoA biosynthesis; malonyl-CoA from acetyl-CoA: step 1/1. Functionally, component of the acetyl coenzyme A carboxylase (ACC) complex. First, biotin carboxylase catalyzes the carboxylation of biotin on its carrier protein (BCCP) and then the CO(2) group is transferred by the carboxyltransferase to acetyl-CoA to form malonyl-CoA. The polypeptide is Acetyl-coenzyme A carboxylase carboxyl transferase subunit alpha (Afipia carboxidovorans (strain ATCC 49405 / DSM 1227 / KCTC 32145 / OM5) (Oligotropha carboxidovorans)).